The primary structure comprises 278 residues: DNA repair protein RecO (278 aa).

The segment covering 1-12 (MGTNDALTSTED) has biased composition (polar residues). Residues 1 to 41 (MGTNDALTSTEDAVTAGANDAPLPAPPEPPRKARRATSRTS) form a disordered region.

Belongs to the RecO family.

Functionally, involved in DNA repair and RecF pathway recombination. This is DNA repair protein RecO from Burkholderia orbicola (strain AU 1054).